The chain runs to 224 residues: uncharacterized protein (224 aa).

Helical transmembrane passes span Leu-39–Ile-59, Tyr-70–Ala-90, Val-103–Ile-123, and Met-139–Thr-159.

The protein resides in the membrane. This is an uncharacterized protein from Dictyostelium discoideum (Social amoeba).